We begin with the raw amino-acid sequence, 87 residues long: Large ribosomal subunit protein bL31B (87 aa).

Belongs to the bacterial ribosomal protein bL31 family. Type B subfamily. Part of the 50S ribosomal subunit.

The chain is Large ribosomal subunit protein bL31B from Klebsiella pneumoniae (strain 342).